Here is a 502-residue protein sequence, read N- to C-terminus: Uric acid degradation bifunctional protein (502 aa).

Residues 1 to 178 are OHCU decarboxylase; the sequence is MMRLKQLNEM…NSMTKHKERV (178 aa). The active-site Proton donor; for OHCU decarboxylase activity is the histidine 68. 5-hydroxy-2-oxo-4-ureido-2,5-dihydro-1H-imidazole-5-carboxylate is bound by residues proline 69, 81 to 85, and 116 to 120; these read SQEEQ and FVMAV. Residues 179 to 502 are urate oxidase; it reads MYYGKGDVFA…DEPDHKGALK (324 aa). Lysine 183 functions as the Charge relay system; for urate oxidase activity in the catalytic mechanism. Lysine 194 (charge relay system) is an active-site residue. Residue threonine 243 is the Charge relay system; for urate oxidase activity of the active site. The urate site is built by threonine 243, aspartate 244, phenylalanine 354, arginine 371, isoleucine 419, glutamine 420, and asparagine 446.

In the N-terminal section; belongs to the OHCU decarboxylase family. It in the C-terminal section; belongs to the uricase family.

It catalyses the reaction 5-hydroxy-2-oxo-4-ureido-2,5-dihydro-1H-imidazole-5-carboxylate + H(+) = (S)-allantoin + CO2. The enzyme catalyses urate + O2 + H2O = 5-hydroxyisourate + H2O2. It functions in the pathway purine metabolism; urate degradation; (S)-allantoin from urate: step 1/3. It participates in purine metabolism; urate degradation; (S)-allantoin from urate: step 3/3. Catalyzes two steps in the degradation of uric acid, i.e. the oxidation of uric acid to 5-hydroxyisourate (HIU) and the stereoselective decarboxylation of 2-oxo-4-hydroxy-4-carboxy-5-ureidoimidazoline (OHCU) to (S)-allantoin. The polypeptide is Uric acid degradation bifunctional protein (uao) (Bacillus sp. (strain TB-90)).